The primary structure comprises 129 residues: Small ribosomal subunit protein uS9 (129 aa).

The protein belongs to the universal ribosomal protein uS9 family.

The sequence is that of Small ribosomal subunit protein uS9 from Nitratiruptor sp. (strain SB155-2).